A 252-amino-acid polypeptide reads, in one-letter code: Chitooligosaccharide deacetylase (252 aa).

Residues His-61 and His-125 each contribute to the Mg(2+) site.

The protein belongs to the YdjC deacetylase family. ChbG subfamily. In terms of assembly, homodimer. It depends on Mg(2+) as a cofactor.

The protein resides in the cytoplasm. The enzyme catalyses N,N'-diacetylchitobiose + H2O = N-acetyl-beta-D-glucosaminyl-(1-&gt;4)-D-glucosamine + acetate. It carries out the reaction diacetylchitobiose-6'-phosphate + H2O = N'-monoacetylchitobiose-6'-phosphate + acetate. It functions in the pathway glycan degradation; chitin degradation. Functionally, involved in the degradation of chitin. ChbG is essential for growth on the acetylated chitooligosaccharides chitobiose and chitotriose but is dispensable for growth on cellobiose and chitosan dimer, the deacetylated form of chitobiose. Deacetylation of chitobiose-6-P and chitotriose-6-P is necessary for both the activation of the chb promoter by the regulatory protein ChbR and the hydrolysis of phosphorylated beta-glucosides by the phospho-beta-glucosidase ChbF. Catalyzes the removal of only one acetyl group from chitobiose-6-P to yield monoacetylchitobiose-6-P, the inducer of ChbR and the substrate of ChbF. The polypeptide is Chitooligosaccharide deacetylase (Escherichia coli O6:H1 (strain CFT073 / ATCC 700928 / UPEC)).